Reading from the N-terminus, the 91-residue chain is uncharacterized protein (91 aa).

This is an uncharacterized protein from Rickettsia prowazekii (strain Madrid E).